Reading from the N-terminus, the 202-residue chain is Small ribosomal subunit protein uS4 (202 aa).

The tract at residues 15–42 is disordered; sequence LGDLPGLTRKAAKRSYPPGQHGQARRKR. The S4 RNA-binding domain maps to 90-152; it reads SRLDNICFRL…KGSKQLAEGN (63 aa).

Belongs to the universal ribosomal protein uS4 family. In terms of assembly, part of the 30S ribosomal subunit. Contacts protein S5. The interaction surface between S4 and S5 is involved in control of translational fidelity.

In terms of biological role, one of the primary rRNA binding proteins, it binds directly to 16S rRNA where it nucleates assembly of the body of the 30S subunit. Functionally, with S5 and S12 plays an important role in translational accuracy. The sequence is that of Small ribosomal subunit protein uS4 from Synechococcus sp. (strain CC9902).